Here is a 555-residue protein sequence, read N- to C-terminus: Formate--tetrahydrofolate ligase (555 aa).

65–72 is an ATP binding site; it reads TPAGEGKS.

This sequence belongs to the formate--tetrahydrofolate ligase family.

The catalysed reaction is (6S)-5,6,7,8-tetrahydrofolate + formate + ATP = (6R)-10-formyltetrahydrofolate + ADP + phosphate. Its pathway is one-carbon metabolism; tetrahydrofolate interconversion. This chain is Formate--tetrahydrofolate ligase, found in Staphylococcus haemolyticus (strain JCSC1435).